The primary structure comprises 92 residues: Large ribosomal subunit protein eL43 (92 aa).

The segment at 39 to 60 (CDFCGKYGMKRKAVGIWSCKGC) adopts a C4-type zinc-finger fold.

This sequence belongs to the eukaryotic ribosomal protein eL43 family.

This chain is Large ribosomal subunit protein eL43 (RPL37a), found in Ostreococcus lucimarinus (strain CCE9901).